A 198-amino-acid polypeptide reads, in one-letter code: DnaJ homolog subfamily C member 5 (198 aa).

4 positions are modified to phosphoserine: serine 8, serine 10, serine 12, and serine 15. The 70-residue stretch at 13 to 82 (GESLYHVLGL…RNIYDKYGSL (70 aa)) folds into the J domain. Tyrosine 17 carries the post-translational modification Phosphotyrosine. Lysine 56 is modified (N6-acetyllysine). Serine 151 is modified (phosphoserine).

As to quaternary structure, homodimer. Interacts with the chaperone complex consisting of HSC70 and SGTA. Interacts with ZDHHC13 (via ANK repeats). Interacts with ZDHHC17 (via ANK repeats). Interacts with SYT1, SYT5 and SYT7, and with SYT9, forming a complex with SNAP25. The interaction with SYT9 is stimulated tenfold in presence of calcium. Formation of the chaperone complex DNAJC5/HSC70 is not regulated by phosphorylation. Ser-10 phosphorylation induces an order-to-disorder transition triggering the interaction with Lys-58. This conformational switch modulates DNAJC5's cellular functions by reducing binding to syntaxin and synaptogamin without altering HSC70 interactions. Post-translationally, palmitoylated. Could be palmitoylated by DHHC3, DHHC7, DHHC15 and DHHC17. Palmitoylation occurs probably in the cysteine-rich domain and regulates DNAJC5 membrane attachment.

It is found in the cytoplasm. The protein resides in the cytosol. It localises to the membrane. The protein localises to the cytoplasmic vesicle. Its subcellular location is the secretory vesicle. It is found in the chromaffin granule membrane. The protein resides in the melanosome. It localises to the cell membrane. Its function is as follows. Acts as a co-chaperone for the SNARE protein SNAP-25. Involved in the calcium-mediated control of a late stage of exocytosis. Acts as a general chaperone in regulated exocytosis. May have an important role in presynaptic function. May be involved in calcium-dependent neurotransmitter release at nerve endings. The sequence is that of DnaJ homolog subfamily C member 5 from Mus musculus (Mouse).